Here is a 651-residue protein sequence, read N- to C-terminus: UvrABC system protein B (651 aa).

The region spanning 25–411 is the Helicase ATP-binding domain; sequence RGISCGAKEQ…TGGVATEQLI (387 aa). An ATP-binding site is contributed by 38 to 45; that stretch reads GVTGSGKT. A Beta-hairpin motif is present at residues 91-114; the sequence is YYDYYQPEAYIPQSDVYIEKDALI. Residues 427-591 form the Helicase C-terminal domain; sequence DGQIHDVMCE…IVPRTIQKPV (165 aa). The disordered stretch occupies residues 593–615; it reads TSLSERVGSSRKKVSRDTNTDPA. Residues 616–651 enclose the UVR domain; that stretch reads NRDIVELQKEMLLCAENLDFERAVEIRNEIKRLTAP.

This sequence belongs to the UvrB family. As to quaternary structure, forms a heterotetramer with UvrA during the search for lesions. Interacts with UvrC in an incision complex.

The protein resides in the cytoplasm. The UvrABC repair system catalyzes the recognition and processing of DNA lesions. A damage recognition complex composed of 2 UvrA and 2 UvrB subunits scans DNA for abnormalities. Upon binding of the UvrA(2)B(2) complex to a putative damaged site, the DNA wraps around one UvrB monomer. DNA wrap is dependent on ATP binding by UvrB and probably causes local melting of the DNA helix, facilitating insertion of UvrB beta-hairpin between the DNA strands. Then UvrB probes one DNA strand for the presence of a lesion. If a lesion is found the UvrA subunits dissociate and the UvrB-DNA preincision complex is formed. This complex is subsequently bound by UvrC and the second UvrB is released. If no lesion is found, the DNA wraps around the other UvrB subunit that will check the other stand for damage. The polypeptide is UvrABC system protein B (Anaplasma marginale (strain St. Maries)).